We begin with the raw amino-acid sequence, 344 residues long: tRNA N6-adenosine threonylcarbamoyltransferase (344 aa).

Fe cation-binding residues include H114 and H118. Substrate contacts are provided by residues 136–140 (LVSGG), D170, G183, D187, and N278. D306 serves as a coordination point for Fe cation.

The protein belongs to the KAE1 / TsaD family. Requires Fe(2+) as cofactor.

It is found in the cytoplasm. The enzyme catalyses L-threonylcarbamoyladenylate + adenosine(37) in tRNA = N(6)-L-threonylcarbamoyladenosine(37) in tRNA + AMP + H(+). Its function is as follows. Required for the formation of a threonylcarbamoyl group on adenosine at position 37 (t(6)A37) in tRNAs that read codons beginning with adenine. Is involved in the transfer of the threonylcarbamoyl moiety of threonylcarbamoyl-AMP (TC-AMP) to the N6 group of A37, together with TsaE and TsaB. TsaD likely plays a direct catalytic role in this reaction. This Mycobacteroides abscessus (strain ATCC 19977 / DSM 44196 / CCUG 20993 / CIP 104536 / JCM 13569 / NCTC 13031 / TMC 1543 / L948) (Mycobacterium abscessus) protein is tRNA N6-adenosine threonylcarbamoyltransferase.